The sequence spans 473 residues: Bifunctional protein HldE (473 aa).

Residues 1 to 318 (MKLSMPRFDQ…RAVQREEGSE (318 aa)) are ribokinase. 194–197 (NLGE) is an ATP binding site. Residue D263 is part of the active site. The cytidylyltransferase stretch occupies residues 343–473 (FTNGCFDILH…TAIVEKIRKA (131 aa)).

In the N-terminal section; belongs to the carbohydrate kinase PfkB family. This sequence in the C-terminal section; belongs to the cytidylyltransferase family. As to quaternary structure, homodimer.

It carries out the reaction D-glycero-beta-D-manno-heptose 7-phosphate + ATP = D-glycero-beta-D-manno-heptose 1,7-bisphosphate + ADP + H(+). The enzyme catalyses D-glycero-beta-D-manno-heptose 1-phosphate + ATP + H(+) = ADP-D-glycero-beta-D-manno-heptose + diphosphate. The protein operates within nucleotide-sugar biosynthesis; ADP-L-glycero-beta-D-manno-heptose biosynthesis; ADP-L-glycero-beta-D-manno-heptose from D-glycero-beta-D-manno-heptose 7-phosphate: step 1/4. It participates in nucleotide-sugar biosynthesis; ADP-L-glycero-beta-D-manno-heptose biosynthesis; ADP-L-glycero-beta-D-manno-heptose from D-glycero-beta-D-manno-heptose 7-phosphate: step 3/4. Functionally, catalyzes the phosphorylation of D-glycero-D-manno-heptose 7-phosphate at the C-1 position to selectively form D-glycero-beta-D-manno-heptose-1,7-bisphosphate. Catalyzes the ADP transfer from ATP to D-glycero-beta-D-manno-heptose 1-phosphate, yielding ADP-D-glycero-beta-D-manno-heptose. The sequence is that of Bifunctional protein HldE from Stutzerimonas stutzeri (strain A1501) (Pseudomonas stutzeri).